A 416-amino-acid polypeptide reads, in one-letter code: Interleukin-1 receptor type 2 (416 aa).

A signal peptide spans 1-13; sequence MFILLVLVTGVSA. Topologically, residues 14–355 are extracellular; sequence FTTPAVVHTG…FQSLHTTVKE (342 aa). Ig-like C2-type domains are found at residues 29 to 136, 146 to 233, and 249 to 357; these read PVTS…LELK, PLVS…YNIT, and PVII…KEVS. 3 disulfides stabilise this stretch: Cys-42/Cys-128, Cys-64/Cys-120, and Cys-164/Cys-219. Residues Asn-124, Asn-208, Asn-231, and Asn-289 are each glycosylated (N-linked (GlcNAc...) asparagine). A disulfide bond links Cys-270 and Cys-338. A helical transmembrane segment spans residues 356-381; the sequence is VSSTFSWGIALAPLSLIILVVGAIWI. The Cytoplasmic portion of the chain corresponds to 382–416; it reads RRRCKRQAGKTYGLTKLPTDNQDFPSSPNQIKEMK. The tract at residues 396–416 is disordered; it reads TKLPTDNQDFPSSPNQIKEMK. Residues 399 to 416 are compositionally biased toward polar residues; that stretch reads PTDNQDFPSSPNQIKEMK.

Belongs to the interleukin-1 receptor family. Associates with IL1RAP to form a non-signaling interleukin-1 receptor complex. In terms of processing, a soluble form (sIL1R2) can also be produced by proteolytic cleavage at the cell surface (shedding) involving a metalloproteinase.

The protein resides in the membrane. It is found in the cell membrane. It localises to the secreted. Functionally, non-signaling receptor for IL1A, IL1B and IL1RN. Reduces IL1B activities. Serves as a decoy receptor by competitive binding to IL1B and preventing its binding to IL1R1. Also modulates cellular response through non-signaling association with IL1RAP after binding to IL1B. IL1R2 (membrane and secreted forms) preferentially binds IL1B and poorly IL1A and IL1RN. The secreted IL1R2 recruits secreted IL1RAP with high affinity; this complex formation may be the dominant mechanism for neutralization of IL1B by secreted/soluble receptors. The protein is Interleukin-1 receptor type 2 (Il1r2) of Rattus norvegicus (Rat).